Reading from the N-terminus, the 513-residue chain is Prostaglandin E2 receptor EP4 subtype (513 aa).

The Extracellular segment spans residues 1–44; sequence MAEVGGTIPRSNRELQRCVLLTTTIMSIPGVNASFSSTPERLNS. Asn-32 carries N-linked (GlcNAc...) asparagine glycosylation. Residues 45–68 form a helical membrane-spanning segment; the sequence is PVTIPAVMFIFGVVGNLVAIVVLC. Over 69–80 the chain is Cytoplasmic; sequence KSRKEQKETTFY. Residues 81 to 104 traverse the membrane as a helical segment; the sequence is TLVCGLAVTDLLGTLLVSPVTIAT. The Extracellular segment spans residues 105–121; sequence YMKGQWPGDQALCDYST. Cys-117 and Cys-195 are disulfide-bonded. A helical membrane pass occupies residues 122–140; it reads FILLFFGLSGLSIICAMSI. The Cytoplasmic segment spans residues 141–160; that stretch reads ERYLAINHAYFYSHYVDKRL. Residues 161–185 form a helical membrane-spanning segment; that stretch reads AGLTLFAIYASNVLFCALPNMGLGR. Topologically, residues 186-209 are extracellular; sequence SERQYPGTWCFIDWTTNVTAYAAF. The chain crosses the membrane as a helical span at residues 210-236; the sequence is SYMYAGFSSFLILATVLCNVLVCGALL. Residues 237 to 295 are Cytoplasmic-facing; the sequence is RMHRQFMRRTSLGTEQHHAAAAAAVASVACRGHAGASPALQRLSDFRRRRSFRRIAGAE. Residues 296 to 323 form a helical membrane-spanning segment; the sequence is IQMVILLIATSLVVLICSIPLVVRVFIN. At 324–340 the chain is on the extracellular side; it reads QLYQPNVVKDISRNPDL. Residues 341–360 form a helical membrane-spanning segment; the sequence is QAIRIASVNPILDPWIYILL. The Cytoplasmic segment spans residues 361–513; that stretch reads RKTVLSKAIE…ETLKLSEKCI (153 aa). The tract at residues 383-403 is disordered; the sequence is GRDSSAQHCSESRRTSSAMSG. The segment covering 384–403 has biased composition (polar residues); it reads RDSSAQHCSESRRTSSAMSG. 3 positions are modified to phosphoserine: Ser-402, Ser-405, and Ser-407.

Belongs to the G-protein coupled receptor 1 family. As to quaternary structure, interacts with FEM1A. In terms of processing, phosphorylation mediates agonist-mediated desensitization by promoting cytoplasmic retention. As to expression, abundant expression in ileum, thymus and mastocytoma P-815 cells. Also observed in lung, spleen, heart and uterus.

It is found in the cell membrane. In terms of biological role, receptor for prostaglandin E2 (PGE2). The activity of this receptor is mediated by G(s) proteins that stimulate adenylate cyclase. Has a relaxing effect on smooth muscle. May play an important role in regulating renal hemodynamics, intestinal epithelial transport, adrenal aldosterone secretion, and uterine function. The sequence is that of Prostaglandin E2 receptor EP4 subtype (Ptger4) from Mus musculus (Mouse).